The chain runs to 162 residues: Small ribosomal subunit protein uS9 (162 aa).

This sequence belongs to the universal ribosomal protein uS9 family.

The chain is Small ribosomal subunit protein uS9 from Methylobacterium nodulans (strain LMG 21967 / CNCM I-2342 / ORS 2060).